We begin with the raw amino-acid sequence, 177 residues long: Large ribosomal subunit protein uL6 (177 aa).

It belongs to the universal ribosomal protein uL6 family. In terms of assembly, part of the 50S ribosomal subunit.

In terms of biological role, this protein binds to the 23S rRNA, and is important in its secondary structure. It is located near the subunit interface in the base of the L7/L12 stalk, and near the tRNA binding site of the peptidyltransferase center. This Azorhizobium caulinodans (strain ATCC 43989 / DSM 5975 / JCM 20966 / LMG 6465 / NBRC 14845 / NCIMB 13405 / ORS 571) protein is Large ribosomal subunit protein uL6.